A 2144-amino-acid chain; its full sequence is Insulin-like receptor (2144 aa).

The signal sequence occupies residues 1–43 (MFNMPRGVTKSKSKRGKIKMENDMAAAATTTACTLGHICVLCR). N-linked (GlcNAc...) asparagine glycosylation occurs at N74. Residues 174-199 (RRQHQQQHHHHYQHHHQQHHQQHHQR) are compositionally biased toward basic residues. A disordered region spans residues 174-200 (RRQHQQQHHHHYQHHHQQHHQQHHQRQ). N-linked (GlcNAc...) asparagine glycosylation occurs at N203. Residues 229–256 (NYKQQQQLQHNQQLPRATPQQKQQEKDR) are disordered. The segment covering 232–242 (QQQQLQHNQQL) has biased composition (low complexity). Residues N265, N356, N376, N406, N468, and N509 are each glycosylated (N-linked (GlcNAc...) asparagine). 8 disulfides stabilise this stretch: C531/C539, C535/C545, C546/C554, C550/C564, C567/C576, C580/C591, C597/C618, and C635/C638. The stretch at 542–586 (EHTCCSQDCLGGCVIDKNGNESCISCRNVSFNNICMDSCPKGYYQ) is one FU repeat. Residues N561 and N569 are each glycosylated (N-linked (GlcNAc...) asparagine). N751, N810, N824, N839, N864, N898, N946, N1053, N1147, N1218, and N1265 each carry an N-linked (GlcNAc...) asparagine glycan. 2 Fibronectin type-III domains span residues 825 to 927 (VTTK…TNPG) and 928 to 1026 (RPSK…EYDD). The segment at 1053 to 1084 (NGSSDKSDGAEGAALDSNAIPNGGATNPSRRR) is disordered. Residues 1210–1305 (LKVDLEHANN…EVEHIKVEPP (96 aa)) form the Fibronectin type-III 3 domain. Residues 1311 to 1331 (VFFWLLGIGLAFLIVSLFGYV) traverse the membrane as a helical segment. Over 1332-2144 (CYLHKRKVPS…PPNGFIGREA (813 aa)) the chain is Cytoplasmic. The interval 1351–1354 (NPFY) is chico-binding. Y1354 carries the post-translational modification Phosphotyrosine; by autocatalysis. Positions 1371–1659 (IIQLAPLGQG…LEPQCPNSQF (289 aa)) constitute a Protein kinase domain. ATP is bound by residues 1377–1385 (LGQGSFGMV) and K1405. D1519 serves as the catalytic Proton acceptor. Residues Y1545, Y1549, and Y1550 each carry the phosphotyrosine; by autocatalysis modification. 4 disordered regions span residues 1690–1724 (VPLD…DQPP), 1788–1871 (RGYE…KKTV), 1886–1962 (LFNH…ISDN), and 2020–2144 (ISHN…GREA). The residue at position 1816 (S1816) is a Phosphoserine. Composition is skewed to low complexity over residues 1849 to 1860 (STASAGSSNASS) and 1894 to 1916 (SNAS…NLTS). The span at 2042–2062 (SDEDNEQEEDDEDEDDDVDDE) shows a compositional bias: acidic residues. A compositionally biased stretch (basic and acidic residues) spans 2063–2073 (HVEHIKMERMP). Over residues 2084 to 2120 (SKTQPPRSRSVSQTRKSPTNPNSGIGATGAGNRSNLL) the composition is skewed to polar residues.

It belongs to the protein kinase superfamily. Tyr protein kinase family. Insulin receptor subfamily. As to quaternary structure, tetramer of 2 alpha and 2 beta chains linked by disulfide bonds. The alpha chains contribute to the formation of the ligand-binding domain, while the beta chains carry the kinase domain. Interacts (via C-terminal cytoplasmic region) with dock/dreadlocks (via SH2 and SH3 domains); when autophosphorylated. May interact (via beta subunit) with chico/IRS-1; this interaction may lead to tyrosine phosphorylation of the insulin receptor substrate chico. Interacts with Elp6; the interaction may stabilize Elp6. Requires Mn(2+) as cofactor. The 280 kDa proreceptor is proteolytically processed to form a 120 kDa alpha subunit and a 170 kDa beta subunit. The beta subunit undergoes cell-specific cleavage to generate a 90 kDa beta subunit and a free 60 kDa C-terminal subunit. Both the 90 kDa and the 170 kDa beta subunits can assemble with the alpha subunits to form mature receptors. In terms of processing, autophosphorylated on tyrosine residues, including Tyr-1549 and Tyr-1550, in response to exogenous insulin. Tyr-1549 and Tyr-1550 are dephosphorylated by Ptp61F recruited by the dock/dreadlocks adapter protein. Post-translationally, phosphorylation of Tyr-1354 is required for Chico-binding.

It is found in the membrane. The protein resides in the cell projection. The protein localises to the axon. It localises to the growth cone membrane. The enzyme catalyses L-tyrosyl-[protein] + ATP = O-phospho-L-tyrosyl-[protein] + ADP + H(+). With respect to regulation, activated in response to insulin. Autophosphorylation activates the kinase activity. Its function is as follows. Has a ligand-stimulated tyrosine-protein kinase activity. Binds 3 insulin-like peptide ligands. Regulates cell number and cell size during development by regulating cell growth and survival, affecting body size and organ size, including ovaries and imaginal disks. Plays a role in life-span determination. May be involved in regulation of other neuroendocrine signaling pathways. Involved in the development of the embryonic nervous system. Functions upstream of dock/dreadlocks for photoreceptor (R cell) axon guidance and targeting in the visual system. Involved in the acs mediated recovery of gut enterocytes following the cytoplasmic purge response to intestinal bacterial infection. The polypeptide is Insulin-like receptor (Drosophila melanogaster (Fruit fly)).